We begin with the raw amino-acid sequence, 391 residues long: Processive diacylglycerol beta-glucosyltransferase (391 aa).

This sequence belongs to the glycosyltransferase 28 family. UgtP subfamily.

It localises to the cell membrane. It carries out the reaction a 1,2-diacyl-3-O-(beta-D-glucopyranosyl)-sn-glycerol + UDP-alpha-D-glucose = a 1,2-diacyl-3-O-(beta-D-Glc-(1-&gt;6)-beta-D-Glc)-sn-glycerol + UDP + H(+). It catalyses the reaction a 1,2-diacyl-sn-glycerol + UDP-alpha-D-glucose = a 1,2-diacyl-3-O-(beta-D-glucopyranosyl)-sn-glycerol + UDP + H(+). It participates in glycolipid metabolism; diglucosyl-diacylglycerol biosynthesis. In terms of biological role, processive glucosyltransferase involved in the biosynthesis of both the bilayer- and non-bilayer-forming membrane glucolipids. Is able to successively transfer two glucosyl residues to diacylglycerol (DAG), thereby catalyzing the formation of beta-monoglucosyl-DAG (3-O-(beta-D-glucopyranosyl)-1,2-diacyl-sn-glycerol) and beta-diglucosyl-DAG (3-O-(beta-D-glucopyranosyl-beta-(1-&gt;6)-D-glucopyranosyl)-1,2-diacyl-sn-glycerol). Beta-diglucosyl-DAG is the predominant glycolipid found in Bacillales and is also used as a membrane anchor for lipoteichoic acid (LTA). This Staphylococcus haemolyticus (strain JCSC1435) protein is Processive diacylglycerol beta-glucosyltransferase.